Reading from the N-terminus, the 43-residue chain is Potassium channel toxin gamma-KTx 3.3 (43 aa).

4 cysteine pairs are disulfide-bonded: C5/C23, C11/C34, C20/C39, and C24/C41.

The protein belongs to the ergtoxin family. Gamma-KTx 3 subfamily. As to expression, expressed by the venom gland.

The protein localises to the secreted. Functionally, blocks Kv11/ERG potassium channels. This Centruroides sculpturatus (Arizona bark scorpion) protein is Potassium channel toxin gamma-KTx 3.3.